Here is a 152-residue protein sequence, read N- to C-terminus: Large ribosomal subunit protein bL9 (152 aa).

The protein belongs to the bacterial ribosomal protein bL9 family.

Functionally, binds to the 23S rRNA. The protein is Large ribosomal subunit protein bL9 of Trichormus variabilis (strain ATCC 29413 / PCC 7937) (Anabaena variabilis).